Reading from the N-terminus, the 1022-residue chain is Protein trachealess (1022 aa).

Residues Leu86–Arg139 form the bHLH domain. The region spanning Glu174–Gly244 is the PAS 1 domain. Residues Leu239–Ala289 are disordered. Residues Ser243 to Met265 are compositionally biased toward gly residues. Over residues His280 to Ala289 the composition is skewed to polar residues. The PAS 2 domain occupies Pro391–Gly461. The region spanning Thr465–Arg508 is the PAC domain. Disordered regions lie at residues Asp525–Ala686, Ala849–Val896, and Asp962–Ala996. Low complexity-rich tracts occupy residues Arg578 to Ser587 and Pro611 to Val625. The Nuclear localization signal signature appears at Lys629–Ala636. Ser673 bears the Phosphoserine; by PKB/Akt1 mark. Over residues Thr851–Pro864 the composition is skewed to polar residues. Positions Gly987–Ala996 are enriched in low complexity.

In terms of assembly, efficient DNA binding requires dimerization with another bHLH protein. Heterodimer with tgo. Post-translationally, ser-673 phosphorylation by PKB/Akt1 is required for nuclear targeting and transcriptional activity. As to expression, trachea, salivary gland ducts, posterior spiracles (Filzkoeper primordia) and a subset of cells in the CNS.

The protein resides in the nucleus. Transcription factor, master regulator of tracheal cell fates in the embryo, necessary for the development of the salivary gland duct, Malpighian tubules and the posterior spiracles. It may induce a general fate of branched tubular structures of epithelial origin. Functions with tgo to regulate expression of btl. This chain is Protein trachealess (trh), found in Drosophila melanogaster (Fruit fly).